We begin with the raw amino-acid sequence, 548 residues long: Glucose-6-phosphate isomerase (548 aa).

Glutamate 354 (proton donor) is an active-site residue. Residues histidine 385 and lysine 513 contribute to the active site.

It belongs to the GPI family.

The protein localises to the cytoplasm. It carries out the reaction alpha-D-glucose 6-phosphate = beta-D-fructose 6-phosphate. It participates in carbohydrate biosynthesis; gluconeogenesis. It functions in the pathway carbohydrate degradation; glycolysis; D-glyceraldehyde 3-phosphate and glycerone phosphate from D-glucose: step 2/4. Functionally, catalyzes the reversible isomerization of glucose-6-phosphate to fructose-6-phosphate. This is Glucose-6-phosphate isomerase from Marinomonas sp. (strain MWYL1).